The primary structure comprises 261 residues: Ribonuclease HII (261 aa).

A compositionally biased stretch (basic and acidic residues) spans 1 to 20; sequence MIRDKSAKRPAKDAPKKAAV. Positions 1-23 are disordered; that stretch reads MIRDKSAKRPAKDAPKKAAVKEA. One can recognise an RNase H type-2 domain in the interval 42 to 230; the sequence is WPVAGCDEAG…VAAARAKHMP (189 aa). Residues D48, E49, and D139 each contribute to the a divalent metal cation site.

The protein belongs to the RNase HII family. Requires Mn(2+) as cofactor. It depends on Mg(2+) as a cofactor.

It localises to the cytoplasm. The enzyme catalyses Endonucleolytic cleavage to 5'-phosphomonoester.. Functionally, endonuclease that specifically degrades the RNA of RNA-DNA hybrids. The sequence is that of Ribonuclease HII from Bradyrhizobium diazoefficiens (strain JCM 10833 / BCRC 13528 / IAM 13628 / NBRC 14792 / USDA 110).